The chain runs to 388 residues: Chorismate synthase (388 aa).

NADP(+) contacts are provided by Arg39 and Arg45. Residues 130-132 (RSS), 251-252 (NA), Gly296, 311-315 (KPIPT), and Arg337 each bind FMN.

This sequence belongs to the chorismate synthase family. In terms of assembly, homotetramer. FMNH2 serves as cofactor.

The catalysed reaction is 5-O-(1-carboxyvinyl)-3-phosphoshikimate = chorismate + phosphate. It functions in the pathway metabolic intermediate biosynthesis; chorismate biosynthesis; chorismate from D-erythrose 4-phosphate and phosphoenolpyruvate: step 7/7. Functionally, catalyzes the anti-1,4-elimination of the C-3 phosphate and the C-6 proR hydrogen from 5-enolpyruvylshikimate-3-phosphate (EPSP) to yield chorismate, which is the branch point compound that serves as the starting substrate for the three terminal pathways of aromatic amino acid biosynthesis. This reaction introduces a second double bond into the aromatic ring system. This chain is Chorismate synthase, found in Streptococcus uberis (strain ATCC BAA-854 / 0140J).